We begin with the raw amino-acid sequence, 74 residues long: U2-sicaritoxin-Sdo1a (74 aa).

The first 20 residues, 1 to 20 (MKLSFCFFLCAIVLFSFAEA), serve as a signal peptide directing secretion. Residues 21 to 39 (RINPNQLKRLRELVRDDEP) constitute a propeptide that is removed on maturation. Cystine bridges form between C42/C59, C49/C62, and C58/C71.

Expressed by the venom gland.

It localises to the secreted. The sequence is that of U2-sicaritoxin-Sdo1a from Hexophthalma dolichocephala (Afrotropical spider).